Reading from the N-terminus, the 461-residue chain is Cysteine--tRNA ligase (461 aa).

Cys28 contacts Zn(2+). A 'HIGH' region motif is present at residues 30-40 (ITVYDLCHIGH). Zn(2+)-binding residues include Cys209, His234, and Glu238. The 'KMSKS' region motif lies at 266 to 270 (KMSKS). Residue Lys269 participates in ATP binding.

This sequence belongs to the class-I aminoacyl-tRNA synthetase family. In terms of assembly, monomer. It depends on Zn(2+) as a cofactor.

It is found in the cytoplasm. It catalyses the reaction tRNA(Cys) + L-cysteine + ATP = L-cysteinyl-tRNA(Cys) + AMP + diphosphate. This is Cysteine--tRNA ligase from Shigella flexneri.